Here is a 218-residue protein sequence, read N- to C-terminus: Protein THO1 (218 aa).

The SAP domain occupies 4–38; sequence YSSLTVVQLKDLLTKRNLSVGGLKNELVQRLIKDD. Serine 22 is subject to Phosphoserine. 2 disordered regions span residues 37–123 and 177–218; these read DDEE…LSPE and LVSR…GYRR. The span at 47 to 57 shows a compositional bias: polar residues; it reads VSPQEQNQEQG. 2 positions are modified to phosphoserine: serine 58 and serine 68. Residues 72-96 are compositionally biased toward basic and acidic residues; that stretch reads TEKKEVSSEPKETNEPKEENKDVQK. 2 stretches are compositionally biased toward low complexity: residues 102–122 and 186–203; these read SATA…ALSP and SGNN…NNRS. Positions 204–218 are enriched in basic residues; the sequence is RVSKNRRGNRSGYRR.

The protein belongs to the SAP domain-containing ribonucleoprotein family. Interacts with SUB2 in the presence of RNA; this interaction facilitates RNA binding of SUB2.

Facilitates RNA binding of SUB2 and likely plays a role in mRNA export. Suppressor of the transcriptional defect of HPR1 by overexpression. In Saccharomyces cerevisiae (strain ATCC 204508 / S288c) (Baker's yeast), this protein is Protein THO1 (THO1).